A 306-amino-acid chain; its full sequence is Meiotically up-regulated gene 73 protein (306 aa).

7 consecutive transmembrane segments (helical) span residues 28 to 48, 59 to 79, 103 to 123, 125 to 145, 154 to 174, 190 to 210, and 224 to 244; these read YWAV…VSIF, FFSI…CNYG, YIQW…TVGV, ILEI…LLAA, WAYY…SVVL, FLWS…CWIL, and IFYS…FSWM.

Belongs to the archaeal/bacterial/fungal opsin family.

The protein resides in the membrane. In terms of biological role, has a role in meiosis. The chain is Meiotically up-regulated gene 73 protein (mug73) from Schizosaccharomyces pombe (strain 972 / ATCC 24843) (Fission yeast).